The chain runs to 1205 residues: Nitric oxide synthase 3 (1205 aa).

The interval 1 to 73 (MGNLKSVGQE…PPEGPKFPRV (73 aa)) is disordered. G2 carries the N-myristoyl glycine lipid modification. 2 S-palmitoyl cysteine lipidation sites follow: C15 and C26. Positions 15-27 (CGLGLGLGLGLCG) are enriched in gly residues. Residues 33-47 (SPAPEPSRAPAPATP) show a composition bias toward pro residues. Residues C96 and C101 each coordinate Zn(2+). The tract at residues 100–488 (CCLGSLVLPR…PDPWKGSATK (389 aa)) is interaction with NOSIP. S104 contacts (6R)-L-erythro-5,6,7,8-tetrahydrobiopterin. Position 116 is a phosphoserine; by CDK5 (S116). Residue C186 participates in heme b binding. L-arginine-binding residues include Q249, W358, Y359, E363, and N368. Positions 448, 449, and 462 each coordinate (6R)-L-erythro-5,6,7,8-tetrahydrobiopterin. Residue Y477 coordinates heme b. Positions 492–512 (ITRKKTFKEVANAVKISASLM) are calmodulin-binding. T497 is subject to Phosphothreonine; by AMPK and PKA. The 184-residue stretch at 522–705 (ATILYASETG…AFRGWAKAAF (184 aa)) folds into the Flavodoxin-like domain. FMN is bound by residues S528, E529, T530, R532, S574, and T575. Phosphoserine is present on residues S617, S635, and S640. Residues S656, C663, E689, and Q693 each contribute to the FMN site. Residues 758 to 1004 (RKMFQATVLS…IRGAPSFRLP (247 aa)) enclose the FAD-binding FR-type domain. R778 is a binding site for NADP(+). H800 lines the FAD pocket. The segment at 820-847 (EDPPPPTESVAVEQLEKGSPGGPPPSWV) is disordered. Position 838 is a phosphoserine (S838). FAD is bound by residues R940, Y942, S943, T958, A960, Y964, V977, C978, and S979. Residues T1018, R1051, S1080, R1081, K1087, Y1089, and Q1091 each coordinate NADP(+). Residue T1177 is modified to Phosphothreonine. Position 1179 is a phosphoserine; by AMPK, PDPK1 and PKA (S1179). S1181 bears the Phosphoserine mark.

It belongs to the NOS family. Homodimer. Interacts with NOSIP and NOSTRIN. Interacts with HSP90AB1. Forms a complex with ASL, ASS1 and SLC7A1; the complex regulates cell-autonomous L-arginine synthesis and citrulline recycling while channeling extracellular L-arginine to nitric oxide synthesis pathway. Requires heme b as cofactor. It depends on FAD as a cofactor. FMN is required as a cofactor. The cofactor is (6R)-L-erythro-5,6,7,8-tetrahydrobiopterin. Phosphorylation by AMPK at Ser-1179 in the presence of Ca(2+)-calmodulin (CaM) activates activity. In absence of Ca(2+)-calmodulin, AMPK also phosphorylates Thr-497, resulting in inhibition of activity. Phosphorylation of Ser-116 by CDK5 reduces activity.

It localises to the cell membrane. The protein localises to the membrane. The protein resides in the caveola. Its subcellular location is the cytoplasm. It is found in the cytoskeleton. It localises to the golgi apparatus. The catalysed reaction is 2 L-arginine + 3 NADPH + 4 O2 + H(+) = 2 L-citrulline + 2 nitric oxide + 3 NADP(+) + 4 H2O. With respect to regulation, stimulated by calcium/calmodulin. Inhibited by NOSIP and NOSTRIN. Its function is as follows. Produces nitric oxide (NO) which is implicated in vascular smooth muscle relaxation through a cGMP-mediated signal transduction pathway. NO mediates vascular endothelial growth factor (VEGF)-induced angiogenesis in coronary vessels and promotes blood clotting through the activation of platelets. This chain is Nitric oxide synthase 3 (NOS3), found in Bos taurus (Bovine).